A 210-amino-acid chain; its full sequence is Na(+)-translocating NADH-quinone reductase subunit D (210 aa).

6 helical membrane passes run 10–30, 42–62, 72–92, 103–123, 131–151, and 178–198; these read ILFAPFLDNNPIALQVLGVCS, FVMTLAVMFVTAFSNLFVSLI, IIVQMAIIASLVIVVDQVLKA, VFVGLIITNCIVMGRAEAYAM, FIDGVGNGLGYGFVLITVAFF, and NGLMLLAPSAFFLIGFMIWAI.

It belongs to the NqrDE/RnfAE family. Composed of six subunits; NqrA, NqrB, NqrC, NqrD, NqrE and NqrF.

It is found in the cell inner membrane. The enzyme catalyses a ubiquinone + n Na(+)(in) + NADH + H(+) = a ubiquinol + n Na(+)(out) + NAD(+). In terms of biological role, NQR complex catalyzes the reduction of ubiquinone-1 to ubiquinol by two successive reactions, coupled with the transport of Na(+) ions from the cytoplasm to the periplasm. NqrA to NqrE are probably involved in the second step, the conversion of ubisemiquinone to ubiquinol. In Photobacterium profundum (strain SS9), this protein is Na(+)-translocating NADH-quinone reductase subunit D.